The chain runs to 341 residues: Delta(1)-pyrroline-2-carboxylate reductase (341 aa).

S47 functions as the Charge relay system in the catalytic mechanism. The active-site Proton donor is H48. R52 is a binding site for substrate. 120 to 124 is an NADP(+) binding site; the sequence is HFSAL. Position 160 (T160) interacts with substrate. 178–180 is an NADP(+) binding site; the sequence is DFA. Position 186-187 (186-187) interacts with substrate; that stretch reads RG. Residue E188 is the Charge relay system of the active site. NADP(+) is bound by residues 229–230 and 305–311; these read HK and RLPSERR.

The protein belongs to the LDH2/MDH2 oxidoreductase family. As to quaternary structure, homodimer.

It carries out the reaction L-proline + NAD(+) = 1-pyrroline-2-carboxylate + NADH + H(+). It catalyses the reaction L-proline + NADP(+) = 1-pyrroline-2-carboxylate + NADPH + H(+). Catalyzes the reduction of Delta(1)-pyrroline-2-carboxylate (Pyr2C) to L-proline, using NADPH as the electron donor. Is likely involved in a degradation pathway that converts cis- and trans-3-hydroxy-L-proline (c3LHyp and t3LHyp) to L-proline, which would allow S.novella to grow on c3LHyp or t3LHyp as a sole carbon source. This is Delta(1)-pyrroline-2-carboxylate reductase from Ancylobacter novellus (strain ATCC 8093 / DSM 506 / JCM 20403 / CCM 1077 / IAM 12100 / NBRC 12443 / NCIMB 10456) (Starkeya novella).